The sequence spans 131 residues: Peptide methionine sulfoxide reductase MsrB (131 aa).

Residues 8-130 (LEEWKEMLDP…NSVCLDLVPR (123 aa)) enclose the MsrB domain. Zn(2+)-binding residues include Cys47, Cys50, Cys96, and Cys99. The active-site Nucleophile is Cys119.

The protein belongs to the MsrB Met sulfoxide reductase family. The cofactor is Zn(2+).

The catalysed reaction is L-methionyl-[protein] + [thioredoxin]-disulfide + H2O = L-methionyl-(R)-S-oxide-[protein] + [thioredoxin]-dithiol. The protein is Peptide methionine sulfoxide reductase MsrB of Pseudomonas savastanoi pv. phaseolicola (strain 1448A / Race 6) (Pseudomonas syringae pv. phaseolicola (strain 1448A / Race 6)).